The sequence spans 245 residues: Tetraspanin-16 (245 aa).

Over 1 to 13 (MAEIHTPYSSLKK) the chain is Cytoplasmic. Residues 14 to 34 (LLSLLNGFVAVSGIILVGLGI) traverse the membrane as a helical segment. Residues 35–37 (GGK) lie on the Extracellular side of the membrane. Residues 38 to 58 (CGGASLTNVLGLSSAYLLHVG) traverse the membrane as a helical segment. Asparagine 59 is a topological domain (cytoplasmic). A helical transmembrane segment spans residues 60–80 (LCLVMGCITVLLGCAGWYGAT). Residues 81–94 (KESRGTLLFCILSM) are Extracellular-facing. Residues 95–115 (VIVLIMEVTAATVVLLFFPIV) form a helical membrane-spanning segment. Topologically, residues 116–245 (GDVALEHTFV…VAQAGLELLA (130 aa)) are cytoplasmic.

It belongs to the tetraspanin (TM4SF) family. In terms of tissue distribution, broadly expressed in most human tissues and cell lines including neural and bone marrow derived tissues.

Its subcellular location is the membrane. In Homo sapiens (Human), this protein is Tetraspanin-16 (TSPAN16).